We begin with the raw amino-acid sequence, 118 residues long: MARIAGINVPDHKHAVIALTAIFGIGKTRSQIICAASGIAESTKLKDLDETQIEALRTEVATFTVEGDLRREVSMNIKRLMDLGCYRGLRHRRSLPVRGQRSKTNARTRKGPRKAIKK.

Positions 94 to 118 (SLPVRGQRSKTNARTRKGPRKAIKK) are disordered.

It belongs to the universal ribosomal protein uS13 family. In terms of assembly, part of the 30S ribosomal subunit. Forms a loose heterodimer with protein S19. Forms two bridges to the 50S subunit in the 70S ribosome.

Located at the top of the head of the 30S subunit, it contacts several helices of the 16S rRNA. In the 70S ribosome it contacts the 23S rRNA (bridge B1a) and protein L5 of the 50S subunit (bridge B1b), connecting the 2 subunits; these bridges are implicated in subunit movement. Contacts the tRNAs in the A and P-sites. This chain is Small ribosomal subunit protein uS13, found in Psychromonas ingrahamii (strain DSM 17664 / CCUG 51855 / 37).